The following is a 283-amino-acid chain: uncharacterized protein (283 aa).

Residues 208 to 232 (SMENKVNETQNSKEDEKKKNDGDGK) are compositionally biased toward basic and acidic residues. The interval 208–237 (SMENKVNETQNSKEDEKKKNDGDGKRSKKK) is disordered.

This is an uncharacterized protein from Saccharomyces cerevisiae (strain ATCC 204508 / S288c) (Baker's yeast).